The chain runs to 180 residues: Large ribosomal subunit protein uL5c (180 aa).

Belongs to the universal ribosomal protein uL5 family. In terms of assembly, part of the 50S ribosomal subunit; contacts the 5S rRNA.

Its subcellular location is the plastid. It localises to the chloroplast. Functionally, binds 5S rRNA, forms part of the central protuberance of the 50S subunit. In Tetradesmus obliquus (Green alga), this protein is Large ribosomal subunit protein uL5c (rpl5).